A 156-amino-acid chain; its full sequence is MPRKGPAPKRPVIIDPVYGSPLVTSLINKVLLNGKRSTAERIVYGAMEGLREKTGNDPIITLKRALENIKPTLEVKSRRVGGATYQVPIEVKPGRANTLALRWLVGYSRARREKTMTERLLNELLDASNGLGAAVKKREDTHKMAESNKAFAHYRW.

The protein belongs to the universal ribosomal protein uS7 family. In terms of assembly, part of the 30S ribosomal subunit. Contacts proteins S9 and S11.

One of the primary rRNA binding proteins, it binds directly to 16S rRNA where it nucleates assembly of the head domain of the 30S subunit. Is located at the subunit interface close to the decoding center, probably blocks exit of the E-site tRNA. The polypeptide is Small ribosomal subunit protein uS7 (Streptomyces avermitilis (strain ATCC 31267 / DSM 46492 / JCM 5070 / NBRC 14893 / NCIMB 12804 / NRRL 8165 / MA-4680)).